A 374-amino-acid chain; its full sequence is UDP-N-acetylglucosamine--N-acetylmuramyl-(pentapeptide) pyrophosphoryl-undecaprenol N-acetylglucosamine transferase (374 aa).

UDP-N-acetyl-alpha-D-glucosamine is bound by residues 35 to 37 (TGG), Asn144, Arg185, Ser211, and Gln305.

Belongs to the glycosyltransferase 28 family. MurG subfamily.

It localises to the cell inner membrane. The catalysed reaction is di-trans,octa-cis-undecaprenyl diphospho-N-acetyl-alpha-D-muramoyl-L-alanyl-D-glutamyl-meso-2,6-diaminopimeloyl-D-alanyl-D-alanine + UDP-N-acetyl-alpha-D-glucosamine = di-trans,octa-cis-undecaprenyl diphospho-[N-acetyl-alpha-D-glucosaminyl-(1-&gt;4)]-N-acetyl-alpha-D-muramoyl-L-alanyl-D-glutamyl-meso-2,6-diaminopimeloyl-D-alanyl-D-alanine + UDP + H(+). It participates in cell wall biogenesis; peptidoglycan biosynthesis. Its function is as follows. Cell wall formation. Catalyzes the transfer of a GlcNAc subunit on undecaprenyl-pyrophosphoryl-MurNAc-pentapeptide (lipid intermediate I) to form undecaprenyl-pyrophosphoryl-MurNAc-(pentapeptide)GlcNAc (lipid intermediate II). In Trichodesmium erythraeum (strain IMS101), this protein is UDP-N-acetylglucosamine--N-acetylmuramyl-(pentapeptide) pyrophosphoryl-undecaprenol N-acetylglucosamine transferase.